Reading from the N-terminus, the 119-residue chain is Fluoride-specific ion channel FluC 1 (119 aa).

4 consecutive transmembrane segments (helical) span residues threonine 2 to leucine 22, alanine 37 to alanine 57, threonine 62 to valine 82, and histidine 99 to alanine 119. Residues glycine 72 and threonine 75 each contribute to the Na(+) site.

This sequence belongs to the fluoride channel Fluc/FEX (TC 1.A.43) family.

The protein resides in the cell membrane. The enzyme catalyses fluoride(in) = fluoride(out). Na(+) is not transported, but it plays an essential structural role and its presence is essential for fluoride channel function. Its function is as follows. Fluoride-specific ion channel. Important for reducing fluoride concentration in the cell, thus reducing its toxicity. This Halobacterium salinarum (strain ATCC 700922 / JCM 11081 / NRC-1) (Halobacterium halobium) protein is Fluoride-specific ion channel FluC 1.